A 137-amino-acid chain; its full sequence is Thioredoxin-like protein R548 (137 aa).

Residues 2 to 137 (SKDSVETNTI…LEKSIVESSQ (136 aa)) form the Thioredoxin domain. Active-site nucleophile residues include C61 and C64. Residues C61 and C64 are joined by a disulfide bond.

Belongs to the thioredoxin family.

Its function is as follows. Participates in various redox reactions through the reversible oxidation of its active center dithiol to a disulfide and catalyzes dithiol-disulfide exchange reactions. This chain is Thioredoxin-like protein R548, found in Acanthamoeba polyphaga mimivirus (APMV).